The primary structure comprises 283 residues: HTH-type transcriptional activator RhaR (283 aa).

Positions 179–277 (DLLMAALGNS…GVTPRVWRQQ (99 aa)) constitute an HTH araC/xylS-type domain. 2 consecutive DNA-binding regions (H-T-H motif) follow at residues 196–217 (QHFC…RQQT) and 244–267 (ISEI…TRET).

In terms of assembly, binds DNA as a dimer.

The protein localises to the cytoplasm. Functionally, activates expression of the rhaSR operon in response to L-rhamnose. The chain is HTH-type transcriptional activator RhaR from Cronobacter sakazakii (strain ATCC BAA-894) (Enterobacter sakazakii).